The sequence spans 178 residues: uncharacterized protein (178 aa).

Positions 152-178 (KKLKGAEPKEHQAPNFEPPTEIFPESN) are disordered.

It belongs to the EUO family.

This is an uncharacterized protein from Chlamydia pneumoniae (Chlamydophila pneumoniae).